We begin with the raw amino-acid sequence, 113 residues long: UPF0482 protein CKO_01577 (113 aa).

The signal sequence occupies residues 1 to 28 (MNNTLSKRLCLTAMLALGAVVYTTSAFA). The tract at residues 44-67 (RQHAAMEKEQWNDTRSLRQKVNTR) is disordered. The span at 47–59 (AAMEKEQWNDTRS) shows a compositional bias: basic and acidic residues.

Belongs to the UPF0482 family.

The chain is UPF0482 protein CKO_01577 from Citrobacter koseri (strain ATCC BAA-895 / CDC 4225-83 / SGSC4696).